Here is a 344-residue protein sequence, read N- to C-terminus: Cytochrome c biogenesis protein CcsA (344 aa).

The next 8 membrane-spanning stretches (helical) occupy residues 21–41 (NVAF…AAFP), 45–65 (LLSE…AALL), 80–100 (LYES…LALH), 106–126 (WVGV…ALAL), 151–171 (VMLL…AFLI), 252–272 (LIGL…VWAN), 287–307 (WALI…TKGW), and 313–333 (ALLA…VNFL).

The protein belongs to the CcmF/CycK/Ccl1/NrfE/CcsA family. In terms of assembly, may interact with ccs1.

It is found in the cellular thylakoid membrane. Its function is as follows. Required during biogenesis of c-type cytochromes (cytochrome c6 and cytochrome f) at the step of heme attachment. This Synechococcus sp. (strain JA-3-3Ab) (Cyanobacteria bacterium Yellowstone A-Prime) protein is Cytochrome c biogenesis protein CcsA.